Reading from the N-terminus, the 277-residue chain is NADPH-dependent 7-cyano-7-deazaguanine reductase (277 aa).

Residue 83 to 85 (VES) participates in substrate binding. Position 85–86 (85–86 (SK)) interacts with NADPH. The Thioimide intermediate role is filled by cysteine 184. Aspartate 191 serves as the catalytic Proton donor. Substrate is bound at residue 223–224 (HE). 252–253 (RG) is a binding site for NADPH.

This sequence belongs to the GTP cyclohydrolase I family. QueF type 2 subfamily. Homodimer.

The protein localises to the cytoplasm. The enzyme catalyses 7-aminomethyl-7-carbaguanine + 2 NADP(+) = 7-cyano-7-deazaguanine + 2 NADPH + 3 H(+). It participates in tRNA modification; tRNA-queuosine biosynthesis. In terms of biological role, catalyzes the NADPH-dependent reduction of 7-cyano-7-deazaguanine (preQ0) to 7-aminomethyl-7-deazaguanine (preQ1). The sequence is that of NADPH-dependent 7-cyano-7-deazaguanine reductase from Ralstonia nicotianae (strain ATCC BAA-1114 / GMI1000) (Ralstonia solanacearum).